The following is a 287-amino-acid chain: Bifunctional protein FolD (287 aa).

NADP(+) is bound by residues 165–167 (GRG), Thr-190, and Ile-231.

Belongs to the tetrahydrofolate dehydrogenase/cyclohydrolase family. Homodimer.

The enzyme catalyses (6R)-5,10-methylene-5,6,7,8-tetrahydrofolate + NADP(+) = (6R)-5,10-methenyltetrahydrofolate + NADPH. It carries out the reaction (6R)-5,10-methenyltetrahydrofolate + H2O = (6R)-10-formyltetrahydrofolate + H(+). The protein operates within one-carbon metabolism; tetrahydrofolate interconversion. Functionally, catalyzes the oxidation of 5,10-methylenetetrahydrofolate to 5,10-methenyltetrahydrofolate and then the hydrolysis of 5,10-methenyltetrahydrofolate to 10-formyltetrahydrofolate. The sequence is that of Bifunctional protein FolD from Heliobacterium modesticaldum (strain ATCC 51547 / Ice1).